A 711-amino-acid chain; its full sequence is Polyribonucleotide nucleotidyltransferase (711 aa).

Mg(2+) is bound by residues Asp-486 and Asp-492. The 60-residue stretch at 553-612 folds into the KH domain; the sequence is PRIHTIKINPDKIKDVIGKGGSVIRALTEETGTTIEIEDDGTVKIAATDGEKAKHAIRRI. An S1 motif domain is found at 622–690; it reads GRVYTGKVTR…RQGRIRLSIK (69 aa). A disordered region spans residues 690 to 711; that stretch reads KEATEQSQPAAAPEAPAAEQGE. Low complexity predominate over residues 694–711; that stretch reads EQSQPAAAPEAPAAEQGE.

This sequence belongs to the polyribonucleotide nucleotidyltransferase family. Component of the RNA degradosome, which is a multiprotein complex involved in RNA processing and mRNA degradation. Requires Mg(2+) as cofactor.

The protein resides in the cytoplasm. It carries out the reaction RNA(n+1) + phosphate = RNA(n) + a ribonucleoside 5'-diphosphate. Involved in mRNA degradation. Catalyzes the phosphorolysis of single-stranded polyribonucleotides processively in the 3'- to 5'-direction. In Shigella dysenteriae serotype 1 (strain Sd197), this protein is Polyribonucleotide nucleotidyltransferase.